We begin with the raw amino-acid sequence, 240 residues long: Cysteine-rich venom protein ablomin (240 aa).

Residues 1–19 form the signal peptide; sequence MIVFIVLPILAAVLQQSSG. Residues 38–166 enclose the SCP domain; that stretch reads VDLHNSLRRS…EYSYFYVCQY (129 aa). 8 disulfides stabilise this stretch: cysteine 75/cysteine 153, cysteine 92/cysteine 167, cysteine 148/cysteine 164, cysteine 186/cysteine 193, cysteine 189/cysteine 198, cysteine 202/cysteine 235, cysteine 211/cysteine 229, and cysteine 220/cysteine 233. Residues 202–235 enclose the ShKT domain; it reads CTQEDVFTNCNSLVQQSNCQHNYIKTNCPASCFC.

This sequence belongs to the CRISP family. Expressed by the venom gland.

The protein localises to the secreted. In terms of biological role, blocks contraction of smooth muscle elicited by high potassium-induced depolarization, but does not block caffeine-stimulated contraction. Since high potassium-treatment activates voltage-gated channels and caffeine exposure activates ryanodine receptors, this toxin may target L-type voltage-gated calcium channels (Cav) (and not ryanodine receptors) on smooth muscle. This toxin also shows a little inhibition on cyclic nucleotide-gated CNGA1 channel. This chain is Cysteine-rich venom protein ablomin, found in Gloydius blomhoffii (Mamushi).